Consider the following 137-residue polypeptide: Large ribosomal subunit protein eL28 (137 aa).

N-acetylserine is present on S2. Glycyl lysine isopeptide (Lys-Gly) (interchain with G-Cter in SUMO2) cross-links involve residues K58 and K65. The residue at position 115 (S115) is a Phosphoserine.

This sequence belongs to the eukaryotic ribosomal protein eL28 family. Component of the large ribosomal subunit.

It is found in the cytoplasm. Its function is as follows. Component of the large ribosomal subunit. The ribosome is a large ribonucleoprotein complex responsible for the synthesis of proteins in the cell. This is Large ribosomal subunit protein eL28 (Rpl28) from Rattus norvegicus (Rat).